We begin with the raw amino-acid sequence, 161 residues long: 2-C-methyl-D-erythritol 2,4-cyclodiphosphate synthase (161 aa).

D10 and H12 together coordinate a divalent metal cation. 4-CDP-2-C-methyl-D-erythritol 2-phosphate is bound by residues 10-12 (DVH) and 36-37 (HS). H44 is a binding site for a divalent metal cation. 4-CDP-2-C-methyl-D-erythritol 2-phosphate contacts are provided by residues 58 to 60 (DIG), 63 to 67 (FPDTD), 102 to 108 (AQAPKML), 134 to 137 (TTTE), F141, and R144.

The protein belongs to the IspF family. As to quaternary structure, homotrimer. It depends on a divalent metal cation as a cofactor.

It catalyses the reaction 4-CDP-2-C-methyl-D-erythritol 2-phosphate = 2-C-methyl-D-erythritol 2,4-cyclic diphosphate + CMP. The protein operates within isoprenoid biosynthesis; isopentenyl diphosphate biosynthesis via DXP pathway; isopentenyl diphosphate from 1-deoxy-D-xylulose 5-phosphate: step 4/6. Involved in the biosynthesis of isopentenyl diphosphate (IPP) and dimethylallyl diphosphate (DMAPP), two major building blocks of isoprenoid compounds. Catalyzes the conversion of 4-diphosphocytidyl-2-C-methyl-D-erythritol 2-phosphate (CDP-ME2P) to 2-C-methyl-D-erythritol 2,4-cyclodiphosphate (ME-CPP) with a corresponding release of cytidine 5-monophosphate (CMP). This Shewanella loihica (strain ATCC BAA-1088 / PV-4) protein is 2-C-methyl-D-erythritol 2,4-cyclodiphosphate synthase.